The primary structure comprises 470 residues: Acetyl-CoA decarbonylase/synthase complex subunit gamma 2 (470 aa).

Residues 1 to 60 form the 4Fe-4S domain; it reads MKINSPLEAYKYLPQTNCGECGQPTCMAFASTLIDRSGKTTDCPPLIKEKKFAKKLAELD. Residues cysteine 18, cysteine 21, cysteine 26, and cysteine 43 each coordinate [4Fe-4S] cluster.

As to quaternary structure, heterodimer of delta and gamma chains. The ACDS complex is made up of alpha, epsilon, beta, gamma and delta chains with a probable stoichiometry of (alpha(2)epsilon(2))(4)-beta(8)-(gamma(1)delta(1))(8). The cofactor is corrinoid. It depends on [4Fe-4S] cluster as a cofactor.

The enzyme catalyses 5,6,7,8-tetrahydrosarcinapterin + methyl-Co(III)-[corrinoid Fe-S protein] = 5-methyltetrahydrosarcinapterin + Co(I)-[corrinoid Fe-S protein] + H(+). It functions in the pathway one-carbon metabolism; methanogenesis from acetate. In terms of biological role, part of a complex that catalyzes the reversible cleavage of acetyl-CoA, allowing growth on acetate as sole source of carbon and energy. The sequence is that of Acetyl-CoA decarbonylase/synthase complex subunit gamma 2 from Methanosarcina mazei (strain ATCC BAA-159 / DSM 3647 / Goe1 / Go1 / JCM 11833 / OCM 88) (Methanosarcina frisia).